The following is a 711-amino-acid chain: Hepatocyte growth factor-like protein (711 aa).

The signal sequence occupies residues 1–18; the sequence is MGWLPLLLLLTQCLGVPG. Residues 21–105 enclose the PAN domain; that stretch reads SPLNDFQVLR…GRCDLFQKKD (85 aa). 20 disulfides stabilise this stretch: C56-C78, C60-C66, C110-C186, C131-C169, C157-C181, C191-C268, C194-C324, C212-C251, C240-C263, C283-C361, C304-C343, C332-C355, C370-C448, C391-C431, C419-C443, C468-C588, C507-C523, C602-C667, C632-C646, and C657-C685. N-linked (GlcNAc...) asparagine glycosylation occurs at N72. 4 Kringle domains span residues 110 to 186, 191 to 268, 283 to 361, and 370 to 448; these read CIMN…IKSC, CVWC…LPRC, CFRG…IRRC, and CYHG…LRRC. N296 carries N-linked (GlcNAc...) asparagine glycosylation. Residues 484-709 enclose the Peptidase S1 domain; that stretch reads VVGGHPGNSP…FVDWIHKVMR (226 aa). A glycan (N-linked (GlcNAc...) asparagine) is linked at N615.

Belongs to the peptidase S1 family. Plasminogen subfamily. As to quaternary structure, dimer of an alpha chain and a beta chain linked by a disulfide bond. Interacts (via beta chain) with MST1R (via SEMA domain). Post-translationally, cleaved after Arg-483, probably by HPN/Hepsin, to yield the active form consisting of two disulfide-linked chains.

The protein localises to the secreted. In Homo sapiens (Human), this protein is Hepatocyte growth factor-like protein (MST1).